The following is a 543-amino-acid chain: MKSPTPALMLQGTSSNAGKSILTAAFCRILLQDGYRVAPFKAQNMALNSHVTADGLELGRAQAVQAAACRLDVDVRMNPVLLKPNSDTGSQVVVMGRPVGNMRVREYMAYKPVAFDAARAAYDSLAADVDVMVLEGAGSPAEVNLKAHDIVNMAMARHAEAKVLLVGDIDRGGVFASLVGTMELLDPWERDLVAGFVLNKFRGDATLLSPAYDVVTGRTGKPFLGVVPWLHDLGLPDEDSVSFRETLAGRAPDVPAGGGMLDIVLVDLPHISNFTDLDALRREPDVAVRVVRSPEQLGSPDAIILPGSKNTLGDLAALRSRGMAEALCALRSAEGGHLGPVIVGICGGFQMMGRFLADPQGVESDHACTEAGLGLLPVTTEMGSAKVLRRTSAKTVSGWCGAGVAAGLMPGTGGGHGGAEVCPGEGYAVHGYEIHHGVTTPDAGGGAVLVCLHESDGSPAGWTTPDGQVWGTYLHGVFDADGFRRGWLDALRVRRGLEPVGRVVARYDLDPALDRLADVVREAVDMGHIYSVLGLSPKGRRQT.

Residues 260–483 form the GATase cobBQ-type domain; sequence MLDIVLVDLP…LHGVFDADGF (224 aa). Cys346 acts as the Nucleophile in catalysis. His475 is an active-site residue.

The protein belongs to the CobB/CobQ family. CobQ subfamily.

The protein operates within cofactor biosynthesis; adenosylcobalamin biosynthesis. Catalyzes amidations at positions B, D, E, and G on adenosylcobyrinic A,C-diamide. NH(2) groups are provided by glutamine, and one molecule of ATP is hydrogenolyzed for each amidation. This is Cobyric acid synthase from Nitratidesulfovibrio vulgaris (strain ATCC 29579 / DSM 644 / CCUG 34227 / NCIMB 8303 / VKM B-1760 / Hildenborough) (Desulfovibrio vulgaris).